A 184-amino-acid polypeptide reads, in one-letter code: Ribosome-recycling factor (184 aa).

The protein belongs to the RRF family.

Its subcellular location is the cytoplasm. Its function is as follows. Responsible for the release of ribosomes from messenger RNA at the termination of protein biosynthesis. May increase the efficiency of translation by recycling ribosomes from one round of translation to another. This Leptospira borgpetersenii serovar Hardjo-bovis (strain JB197) protein is Ribosome-recycling factor.